We begin with the raw amino-acid sequence, 98 residues long: MFEQNLTSEALTVTTVTSQDQITQKPLRDSVKASLKNYLAQLNGQEVTELYELVLAEVEQPLLDTIMQYTRGNQTRAATMMGINRGTLRKKLKKYGMN.

A DNA-binding region (H-T-H motif) is located at residues 74 to 93 (QTRAATMMGINRGTLRKKLK).

Belongs to the transcriptional regulatory Fis family. As to quaternary structure, homodimer.

Functionally, activates ribosomal RNA transcription. Plays a direct role in upstream activation of rRNA promoters. This Vibrio parahaemolyticus serotype O3:K6 (strain RIMD 2210633) protein is DNA-binding protein Fis.